A 439-amino-acid chain; its full sequence is Adenylosuccinate synthetase (439 aa).

GTP-binding positions include 25-31, 53-55, and Lys-62; these read GDEGKGK and GHT. The active-site Proton acceptor is Asp-26. Mg(2+)-binding residues include Asp-26 and Gly-53. IMP is bound by residues 26-29 and 51-54; these read DEGK and NAGH. Residue His-54 is the Proton donor of the active site. IMP is bound by residues Thr-141, Arg-155, Asn-232, and Thr-247. Thr-307 lines the GTP pocket. 307-313 contacts substrate; sequence TTTNRPR. Arg-311 is an IMP binding site. GTP contacts are provided by residues Arg-313, 339–341, and 425–427; these read KLD and GVG.

Belongs to the adenylosuccinate synthetase family. Homodimer. It depends on Mg(2+) as a cofactor.

It is found in the cytoplasm. It catalyses the reaction IMP + L-aspartate + GTP = N(6)-(1,2-dicarboxyethyl)-AMP + GDP + phosphate + 2 H(+). Its pathway is purine metabolism; AMP biosynthesis via de novo pathway; AMP from IMP: step 1/2. Functionally, plays an important role in the salvage pathway for purine nucleotide biosynthesis. Catalyzes the first committed step in the biosynthesis of AMP from IMP. The sequence is that of Adenylosuccinate synthetase from Plasmodium yoelii yoelii.